The chain runs to 179 residues: MGITAGKSVLVLLAFLAFASCCYAAYRPSETLCGGELVDTLQFVCGDRGFYFSRPSSRINRRSRGIVEECCFRSCDLALLETYCATPAKSERDVSASTTVLPDDVTAYPVGKFFQYDIWKQSTQRLRRGLPAFLRARRGRTLAKELEALREAKSHRPLIALPTQDPATHGGASSKASSD.

Residues 1-24 (MGITAGKSVLVLLAFLAFASCCYA) form the signal peptide. A b region spans residues 25–52 (AYRPSETLCGGELVDTLQFVCGDRGFYF). 3 disulfide bridges follow: Cys-33/Cys-71, Cys-45/Cys-84, and Cys-70/Cys-75. The interval 53 to 64 (SRPSSRINRRSR) is c. The segment at 65–85 (GIVEECCFRSCDLALLETYCA) is a. Residues 86 to 91 (TPAKSE) form a d region. Residues 92–179 (RDVSASTTVL…GGASSKASSD (88 aa)) constitute a propeptide, e peptide. An O-linked (GalNAc...) threonine glycan is attached at Thr-106. Ser-154 is a glycosylation site (O-linked (GalNAc...) serine). A disordered region spans residues 160–179 (ALPTQDPATHGGASSKASSD). O-linked (GalNAc...) threonine glycosylation occurs at Thr-163.

The protein belongs to the insulin family. As to quaternary structure, interacts with MYORG; this interaction is required for IGF2 secretion. Interacts with integrins ITGAV:ITGB3 and ITGA6:ITGB4; integrin-binding is required for IGF2 signaling. Interacts with IGFBP2. In terms of processing, proteolytically processed by PCSK4, proIGF2 is cleaved at Arg-128 and Arg-92 to generate big-IGF2 and mature IGF2.

The protein localises to the secreted. Functionally, the insulin-like growth factors possess growth-promoting activity. Major fetal growth hormone in mammals. Plays a key role in regulating fetoplacental development. IGF2 is influenced by placental lactogen. Also involved in tissue differentiation. In adults, involved in glucose metabolism in adipose tissue, skeletal muscle and liver. Acts as a ligand for integrin which is required for IGF2 signaling. Positively regulates myogenic transcription factor MYOD1 function by facilitating the recruitment of transcriptional coactivators, thereby controlling muscle terminal differentiation. Inhibits myoblast differentiation and modulates metabolism via increasing the mitochondrial respiration rate. In terms of biological role, preptin undergoes glucose-mediated co-secretion with insulin, and acts as a physiological amplifier of glucose-mediated insulin secretion. Exhibits osteogenic properties by increasing osteoblast mitogenic activity through phosphoactivation of MAPK1 and MAPK3. The protein is Insulin-like growth factor 2 of Bos taurus (Bovine).